The sequence spans 127 residues: NADPH-dependent 7-cyano-7-deazaguanine reductase (127 aa).

C40 functions as the Thioimide intermediate in the catalytic mechanism. D47 (proton donor) is an active-site residue. Residues 62-64 (VEL) and 81-82 (HE) each bind substrate.

It belongs to the GTP cyclohydrolase I family. QueF type 1 subfamily.

The protein localises to the cytoplasm. It carries out the reaction 7-aminomethyl-7-carbaguanine + 2 NADP(+) = 7-cyano-7-deazaguanine + 2 NADPH + 3 H(+). Its pathway is tRNA modification; tRNA-queuosine biosynthesis. In terms of biological role, catalyzes the NADPH-dependent reduction of 7-cyano-7-deazaguanine (preQ0) to 7-aminomethyl-7-deazaguanine (preQ1). The chain is NADPH-dependent 7-cyano-7-deazaguanine reductase from Campylobacter jejuni subsp. jejuni serotype O:2 (strain ATCC 700819 / NCTC 11168).